The sequence spans 121 residues: Cell division protein FtsB (121 aa).

Topologically, residues 1-6 are cytoplasmic; it reads MRNWRW. Residues 7–24 traverse the membrane as a helical segment; the sequence is LLLVLAVLLAWLQYRFWF. Residues 25–121 lie on the Periplasmic side of the membrane; that stretch reads GPGNSGEVMM…PEPVDPVDHP (97 aa). Positions 31–66 form a coiled coil; the sequence is EVMMLEAQVAHQTQDNEGLRQRNQALAAEVKDLKDG. The tract at residues 98 to 121 is disordered; that stretch reads APASAEASAPAQQAPEPVDPVDHP. A compositionally biased stretch (low complexity) spans 99-113; sequence PASAEASAPAQQAPE.

It belongs to the FtsB family. In terms of assembly, part of a complex composed of FtsB, FtsL and FtsQ.

The protein localises to the cell inner membrane. Functionally, essential cell division protein. May link together the upstream cell division proteins, which are predominantly cytoplasmic, with the downstream cell division proteins, which are predominantly periplasmic. This is Cell division protein FtsB from Xanthomonas axonopodis pv. citri (strain 306).